Consider the following 331-residue polypeptide: Ketol-acid reductoisomerase (NADP(+)) (331 aa).

The KARI N-terminal Rossmann domain occupies 2-182 (IKKYYDADCN…GAGRAGILET (181 aa)). Residues 25–28 (YGSQ), arginine 48, and serine 51 contribute to the NADP(+) site. Residue histidine 108 is part of the active site. Glycine 134 is an NADP(+) binding site. Positions 183 to 329 (TFREETETDL…AELRKMMSWI (147 aa)) constitute a KARI C-terminal knotted domain. Mg(2+) is bound by residues aspartate 191, glutamate 195, glutamate 227, and glutamate 231. Serine 252 is a substrate binding site.

This sequence belongs to the ketol-acid reductoisomerase family. Mg(2+) serves as cofactor.

The enzyme catalyses (2R)-2,3-dihydroxy-3-methylbutanoate + NADP(+) = (2S)-2-acetolactate + NADPH + H(+). It carries out the reaction (2R,3R)-2,3-dihydroxy-3-methylpentanoate + NADP(+) = (S)-2-ethyl-2-hydroxy-3-oxobutanoate + NADPH + H(+). It functions in the pathway amino-acid biosynthesis; L-isoleucine biosynthesis; L-isoleucine from 2-oxobutanoate: step 2/4. The protein operates within amino-acid biosynthesis; L-valine biosynthesis; L-valine from pyruvate: step 2/4. Functionally, involved in the biosynthesis of branched-chain amino acids (BCAA). Catalyzes an alkyl-migration followed by a ketol-acid reduction of (S)-2-acetolactate (S2AL) to yield (R)-2,3-dihydroxy-isovalerate. In the isomerase reaction, S2AL is rearranged via a Mg-dependent methyl migration to produce 3-hydroxy-3-methyl-2-ketobutyrate (HMKB). In the reductase reaction, this 2-ketoacid undergoes a metal-dependent reduction by NADPH to yield (R)-2,3-dihydroxy-isovalerate. The protein is Ketol-acid reductoisomerase (NADP(+)) of Brachyspira hyodysenteriae (strain ATCC 49526 / WA1).